The primary structure comprises 237 residues: Probable GTP-binding protein EngB (237 aa).

Residues 23–209 enclose the EngB-type G domain; it reads AVPEVAFAGR…QAVIAGWLNL (187 aa). Residues 31–38, 58–62, 82–85, 149–152, and 187–190 contribute to the GTP site; these read GRSNAGKS, GRTQH, DLPG, TKAD, and LFSS. Residues Ser38 and Thr60 each contribute to the Mg(2+) site. A disordered region spans residues 214–237; sequence KAEREPAAANSVPPAVPPASDPAA. Over residues 227–237 the composition is skewed to pro residues; it reads PAVPPASDPAA.

Belongs to the TRAFAC class TrmE-Era-EngA-EngB-Septin-like GTPase superfamily. EngB GTPase family. The cofactor is Mg(2+).

Functionally, necessary for normal cell division and for the maintenance of normal septation. The chain is Probable GTP-binding protein EngB from Cupriavidus taiwanensis (strain DSM 17343 / BCRC 17206 / CCUG 44338 / CIP 107171 / LMG 19424 / R1) (Ralstonia taiwanensis (strain LMG 19424)).